Consider the following 905-residue polypeptide: METSTTTTLLQQERIPENSEPISTHIHTHSLPPTPPGTAKPSRIGSFHDLQELSSVESPRLDHIKPYPLPPKFSPKSVLKEDLKTPDNFVERDPRLIRLTGVHPFNVEAPLSDLYDEGFLTSENLHYVRNHGHVPRCEDDDILDWEFEISGLVENPIKMNVRDLINDYQQLTYPVTFVCAGNRRKEQNIVRKTKGFSWGPAGLSTALWTGVAIGDLLSAAKPKRGARYVCFEGADKLPNGYYGTSIKLNWCMDPNRGVMVAHKMNGNPLPPDHGKPVRIVIPGQIGGRSIKWLKKITITQEPSDNWYHIYDNRVLPTMISPEESANLPEVWKDEKYAIYDLSTNSAICYPAHEEKVPFTDAPASYKVRGYAYSGGGRRITRVEVTLDKGKSWRLANIRYPEDDYRNAPEGDTLYGGRVDMWWRETSFCWCFWDLDIPLDELKSADDIMMRAMDESMNVQPRDMYWSVLGMMNNPWFRIVIHKEDHALRFEHPTHATLKIKGWMERVKEAGGDLTNGYWGEKAPGEVQEVVVKEPEKQICMTNPQINRKITIEELKAHSGEEEPWFVVKGEVYDGTPYLSGHPGGAASIFGAAGQDATEEFMAIHSENAKAMLPTYHIGTLDEESRAILSGDATKTNDDADREVFLQAKTWSKAILDKKTSISPDTKIFSFKLNHEAQKIGLPTGQHLMMRLRDPATREAIIRSYTPYSDGSDCGRLDILIKIYYDTPQRKGGVMTQALDALPIGHWVDFKGPTGKFVYHGNGLCTINEKERRVRRFIMVCGGSGITPIRQVLRAVIDNPKDTTPCLVFNGNRSVNDILCMEELEELEAANPSRCRVVNALSNPPPEWNGLKGFVNQALVPEYMDLPKASGEGDELLLVCGPPPMVKAVEASFLGMGFKSDDFVFF.

The disordered stretch occupies residues Met1–Ser42. Cys179 lines the Mo-molybdopterin pocket. One can recognise a Cytochrome b5 heme-binding domain in the interval Asn546–Asp621. The heme site is built by His581 and His604. In terms of domain architecture, FAD-binding FR-type spans Lys648–His759. FAD is bound by residues Arg702 to Thr705, Leu719 to Tyr723, Val733 to Thr735, Ser783, and Thr786. Leu875–Met884 provides a ligand contact to NADP(+).

It belongs to the nitrate reductase family. Homodimer. FAD is required as a cofactor. Requires heme as cofactor. Mo-molybdopterin serves as cofactor.

It catalyses the reaction nitrite + NADP(+) + H2O = nitrate + NADPH + H(+). Nitrate reductase is a key enzyme involved in the first step of nitrate assimilation in plants, fungi and bacteria. This is Nitrate reductase [NADPH] (NIA) from Fusarium oxysporum (Fusarium vascular wilt).